The following is a 692-amino-acid chain: Glycine--tRNA ligase beta subunit (692 aa).

It belongs to the class-II aminoacyl-tRNA synthetase family. As to quaternary structure, tetramer of two alpha and two beta subunits.

Its subcellular location is the cytoplasm. The catalysed reaction is tRNA(Gly) + glycine + ATP = glycyl-tRNA(Gly) + AMP + diphosphate. The protein is Glycine--tRNA ligase beta subunit of Limosilactobacillus fermentum (strain NBRC 3956 / LMG 18251) (Lactobacillus fermentum).